We begin with the raw amino-acid sequence, 222 residues long: Homing endonuclease I-ApeI (222 aa).

Probably functions as a monomer. Requires Mg(2+) as cofactor. It depends on Mn(2+) as a cofactor.

In terms of biological role, endonuclease involved in 16S rRNA intron I-alpha homing. Recognizes the minimal target 5'-GCAAGGCTGAAACTTAAAGG-3'; generates 4 base 3' protruding ends 5'-AAAC-3' and 5'-GTTT-3'. The polypeptide is Homing endonuclease I-ApeI (apeI) (Aeropyrum pernix (strain ATCC 700893 / DSM 11879 / JCM 9820 / NBRC 100138 / K1)).